A 245-amino-acid chain; its full sequence is 1-(5-phosphoribosyl)-5-[(5-phosphoribosylamino)methylideneamino] imidazole-4-carboxamide isomerase (245 aa).

Catalysis depends on D7, which acts as the Proton acceptor. The Proton donor role is filled by D129.

Belongs to the HisA/HisF family.

The protein localises to the cytoplasm. The catalysed reaction is 1-(5-phospho-beta-D-ribosyl)-5-[(5-phospho-beta-D-ribosylamino)methylideneamino]imidazole-4-carboxamide = 5-[(5-phospho-1-deoxy-D-ribulos-1-ylimino)methylamino]-1-(5-phospho-beta-D-ribosyl)imidazole-4-carboxamide. The protein operates within amino-acid biosynthesis; L-histidine biosynthesis; L-histidine from 5-phospho-alpha-D-ribose 1-diphosphate: step 4/9. The protein is 1-(5-phosphoribosyl)-5-[(5-phosphoribosylamino)methylideneamino] imidazole-4-carboxamide isomerase of Shewanella sp. (strain MR-4).